Reading from the N-terminus, the 335-residue chain is Cell division protein ZipA (335 aa).

Residues 1–6 (MENLQL) lie on the Periplasmic side of the membrane. The chain crosses the membrane as a helical span at residues 7-27 (VLFVLGAVAIIAVLVHGFWSI). The Cytoplasmic segment spans residues 28-335 (RRQQPKSLKE…SYLQRIRAQM (308 aa)). Disordered stretches follow at residues 37–128 (ESPM…NEEV) and 163–185 (RPAP…VSVE). The span at 170–185 (APQSVAPASVEPVSVE) shows a compositional bias: low complexity.

It belongs to the ZipA family. In terms of assembly, interacts with FtsZ via their C-terminal domains.

It is found in the cell inner membrane. Functionally, essential cell division protein that stabilizes the FtsZ protofilaments by cross-linking them and that serves as a cytoplasmic membrane anchor for the Z ring. Also required for the recruitment to the septal ring of downstream cell division proteins. The polypeptide is Cell division protein ZipA (Shewanella loihica (strain ATCC BAA-1088 / PV-4)).